The primary structure comprises 218 residues: N-(5'-phosphoribosyl)anthranilate isomerase (218 aa).

It belongs to the TrpF family.

The enzyme catalyses N-(5-phospho-beta-D-ribosyl)anthranilate = 1-(2-carboxyphenylamino)-1-deoxy-D-ribulose 5-phosphate. It participates in amino-acid biosynthesis; L-tryptophan biosynthesis; L-tryptophan from chorismate: step 3/5. In Bordetella bronchiseptica (strain ATCC BAA-588 / NCTC 13252 / RB50) (Alcaligenes bronchisepticus), this protein is N-(5'-phosphoribosyl)anthranilate isomerase.